The sequence spans 125 residues: Basic leucine zipper transcriptional factor ATF-like (125 aa).

Over residues 1 to 14 (MPHSSDSSDSSFSR) the composition is skewed to low complexity. The interval 1–59 (MPHSSDSSDSSFSRSPPPGKQDSSDDVRKVQRREKNRIAAQKSRQRQTQKADTLHLESE) is disordered. The bZIP domain occupies 26 to 89 (DVRKVQRREK…KYFTSVLSSH (64 aa)). Residues 28–50 (RKVQRREKNRIAAQKSRQRQTQK) are basic motif. A Phosphoserine modification is found at Ser-43. Thr-48 is subject to Phosphothreonine. The leucine-zipper stretch occupies residues 54–75 (LHLESEDLEKQNAALRKEIKQL).

The protein belongs to the bZIP family. In terms of assembly, heterodimer; mainly heterodimerizes with JUNB. The BATF-JUNB heterodimer interacts with IRF4 and IRF8. Interacts (via bZIP domain) with IRF4 and IRF8; the interaction is direct. Also forms heterodimers with JUN and JUND. Interacts with IFI35. Post-translationally, phosphorylated on serine and threonine residues and at least one tyrosine residue. Phosphorylation at Ser-43 inhibit DNA binding activity and transforms it as a negative regulator of AP-1 mediated transcription. Detected in postnatal and adult lymphoid tissues such as thymus, spleen and lymph nodes. In thymus most concentrated expression is found in the immediate cortical layer. Differentially expressed during T-cell development in thymus. Highly expressed in Th17, Th1 and Th2 cells and in activated B-cells.

It localises to the nucleus. Its subcellular location is the cytoplasm. Its function is as follows. AP-1 family transcription factor that controls the differentiation of lineage-specific cells in the immune system: specifically mediates the differentiation of T-helper 17 cells (Th17), follicular T-helper cells (TfH), CD8(+) dendritic cells and class-switch recombination (CSR) in B-cells. Acts via the formation of a heterodimer with JUNB that recognizes and binds DNA sequence 5'-TGA[CG]TCA-3'. The BATF-JUNB heterodimer also forms a complex with IRF4 (or IRF8) in immune cells, leading to recognition of AICE sequence (5'-TGAnTCA/GAAA-3'), an immune-specific regulatory element, followed by cooperative binding of BATF and IRF4 (or IRF8) and activation of genes. Controls differentiation of T-helper cells producing interleukin-17 (Th17 cells) by binding to Th17-associated gene promoters: regulates expression of the transcription factor RORC itself and RORC target genes such as IL17 (IL17A or IL17B). Also involved in differentiation of follicular T-helper cells (TfH) by directing expression of BCL6 and MAF. In B-cells, involved in class-switch recombination (CSR) by controlling the expression of both AICDA and of germline transcripts of the intervening heavy-chain region and constant heavy-chain region (I(H)-C(H)). Following infection, can participate in CD8(+) dendritic cell differentiation via interaction with IRF4 and IRF8 to mediate cooperative gene activation. Regulates effector CD8(+) T-cell differentiation by regulating expression of SIRT1. Following DNA damage, part of a differentiation checkpoint that limits self-renewal of hematopoietic stem cells (HSCs): up-regulated by STAT3, leading to differentiation of HSCs, thereby restricting self-renewal of HSCs. The chain is Basic leucine zipper transcriptional factor ATF-like (Batf) from Mus musculus (Mouse).